We begin with the raw amino-acid sequence, 242 residues long: UPF0157 protein PA4798 (242 aa).

The interval 215-242 (AGAESTPGGPADTAYFESLRSRVSKPQD) is disordered.

The protein belongs to the UPF0157 (GrpB) family.

The protein is UPF0157 protein PA4798 of Pseudomonas aeruginosa (strain ATCC 15692 / DSM 22644 / CIP 104116 / JCM 14847 / LMG 12228 / 1C / PRS 101 / PAO1).